The following is an 84-amino-acid chain: Large ribosomal subunit protein bL27 (84 aa).

The tract at residues methionine 1 to leucine 21 is disordered.

It belongs to the bacterial ribosomal protein bL27 family.

The protein is Large ribosomal subunit protein bL27 of Baumannia cicadellinicola subsp. Homalodisca coagulata.